The chain runs to 199 residues: Large ribosomal subunit protein mL51 (199 aa).

Residues M1–T15 constitute a mitochondrion transit peptide.

The protein belongs to the mitochondrion-specific ribosomal protein mL51 family. Component of the mitochondrial ribosome large subunit (39S) which comprises a 16S rRNA and about 50 distinct proteins.

It is found in the mitochondrion. The chain is Large ribosomal subunit protein mL51 (mrpl-51) from Caenorhabditis elegans.